The chain runs to 672 residues: Zinc finger and BTB domain-containing protein 24 (672 aa).

The 67-residue stretch at cysteine 39 to glutamate 105 folds into the BTB domain. The disordered stretch occupies residues histidine 136–arginine 208. The segment at residues lysine 140–leucine 152 is a DNA-binding region (a.T hook 1). The span at lysine 148–proline 158 shows a compositional bias: basic and acidic residues. Over residues serine 160 to glutamine 171 the composition is skewed to polar residues. Residues glutamate 198–arginine 208 are compositionally biased toward basic residues. Residues proline 223–threonine 235 constitute a DNA-binding region (a.T hook 2). 8 C2H2-type zinc fingers span residues alanine 237–histidine 259, phenylalanine 265–histidine 287, tyrosine 293–histidine 315, phenylalanine 321–histidine 343, proline 349–histidine 371, phenylalanine 377–histidine 399, tyrosine 405–histidine 427, and phenylalanine 433–histidine 455. Residues lysine 453–lysine 492 are disordered. Residues glutamate 476–glutamine 487 are compositionally biased toward low complexity.

This sequence belongs to the krueppel C2H2-type zinc-finger protein family.

The protein resides in the nucleus. In terms of biological role, may be involved in BMP2-induced transcription. This Danio rerio (Zebrafish) protein is Zinc finger and BTB domain-containing protein 24 (zbtb24).